A 36-amino-acid chain; its full sequence is Photosystem II reaction center protein X (36 aa).

Residues Leu9–Ile29 traverse the membrane as a helical segment.

It belongs to the PsbX family. Type 1 subfamily. PSII is composed of 1 copy each of membrane proteins PsbA, PsbB, PsbC, PsbD, PsbE, PsbF, PsbH, PsbI, PsbJ, PsbK, PsbL, PsbM, PsbT, PsbX, Psb30/Ycf12, peripheral proteins PsbO, CyanoQ (PsbQ), PsbU, PsbV and a large number of cofactors. It forms dimeric complexes.

Its subcellular location is the cell inner membrane. In terms of biological role, involved in the binding and/or turnover of quinones at the Q(B) site of photosystem II (PSII). PSII is a light-driven water plastoquinone oxidoreductase, using light energy to abstract electrons from H(2)O, generating a proton gradient subsequently used for ATP formation. The protein is Photosystem II reaction center protein X of Gloeobacter violaceus (strain ATCC 29082 / PCC 7421).